A 314-amino-acid polypeptide reads, in one-letter code: Deacetoxycephalosporin C synthase (314 aa).

The Fe2OG dioxygenase domain occupies 156–269 (DCEPLLRLRY…RTSSVFFLRP (114 aa)).

This sequence belongs to the iron/ascorbate-dependent oxidoreductase family. The cofactor is Fe cation. Requires L-ascorbate as cofactor.

It carries out the reaction penicillin N + 2-oxoglutarate + O2 = deacetoxycephalosporin C + succinate + CO2 + H2O. It functions in the pathway antibiotic biosynthesis; cephalosporin C biosynthesis. In terms of biological role, catalyzes the step from penicillin N to deacetoxy-cephalosporin C. This is Deacetoxycephalosporin C synthase (cefE) from Amycolatopsis lactamdurans (Nocardia lactamdurans).